The following is a 106-amino-acid chain: Probable insulin-like peptide beta-type 1 (106 aa).

A signal peptide spans 1-19; the sequence is MFSFFTYFLLSALLLSASC. Positions 20–51 are cleaved as a propeptide — removed; by convertase egl-3; that stretch reads RQPSMDTSKADRILREIEMETELENQLSRARR. 4 cysteine pairs are disulfide-bonded: C60/C89, C72/C102, C76/C103, and C88/C93.

Belongs to the insulin family. Expressed by ASI and ASJ sensory neurons and weakly by ventral cord motor neurons.

The protein localises to the secreted. Functionally, probable insulin-like peptide which negatively regulates synapse development at the neuromuscular junctions. Probably acts as a daf-2/InsR agonist ligand to prevent dauer formation under optimal environmental conditions. This is Probable insulin-like peptide beta-type 1 (ins-4) from Caenorhabditis elegans.